Reading from the N-terminus, the 435-residue chain is Putative BTB/POZ domain-containing protein L275 (435 aa).

Positions 80–149 constitute a BTB domain; the sequence is YDGYVYINVG…IKGKQNDNHN (70 aa).

It belongs to the mimivirus BTB/WD family.

In Acanthamoeba polyphaga mimivirus (APMV), this protein is Putative BTB/POZ domain-containing protein L275.